Here is a 105-residue protein sequence, read N- to C-terminus: Large ribosomal subunit protein uL24 (105 aa).

It belongs to the universal ribosomal protein uL24 family. Part of the 50S ribosomal subunit.

One of two assembly initiator proteins, it binds directly to the 5'-end of the 23S rRNA, where it nucleates assembly of the 50S subunit. Its function is as follows. One of the proteins that surrounds the polypeptide exit tunnel on the outside of the subunit. The chain is Large ribosomal subunit protein uL24 from Vibrio parahaemolyticus serotype O3:K6 (strain RIMD 2210633).